Here is a 253-residue protein sequence, read N- to C-terminus: 3-deoxy-manno-octulosonate cytidylyltransferase (253 aa).

This sequence belongs to the KdsB family.

Its subcellular location is the cytoplasm. The catalysed reaction is 3-deoxy-alpha-D-manno-oct-2-ulosonate + CTP = CMP-3-deoxy-beta-D-manno-octulosonate + diphosphate. Its pathway is nucleotide-sugar biosynthesis; CMP-3-deoxy-D-manno-octulosonate biosynthesis; CMP-3-deoxy-D-manno-octulosonate from 3-deoxy-D-manno-octulosonate and CTP: step 1/1. It functions in the pathway bacterial outer membrane biogenesis; lipopolysaccharide biosynthesis. In terms of biological role, activates KDO (a required 8-carbon sugar) for incorporation into bacterial lipopolysaccharide in Gram-negative bacteria. The protein is 3-deoxy-manno-octulosonate cytidylyltransferase of Aeromonas hydrophila subsp. hydrophila (strain ATCC 7966 / DSM 30187 / BCRC 13018 / CCUG 14551 / JCM 1027 / KCTC 2358 / NCIMB 9240 / NCTC 8049).